Reading from the N-terminus, the 313-residue chain is Aspartate carbamoyltransferase catalytic subunit (313 aa).

Carbamoyl phosphate contacts are provided by Arg66 and Thr67. Residue Lys94 participates in L-aspartate binding. Carbamoyl phosphate-binding residues include Arg116, His144, and Gln147. L-aspartate-binding residues include Arg177 and Arg231. Residues Gly272 and Pro273 each coordinate carbamoyl phosphate.

It belongs to the aspartate/ornithine carbamoyltransferase superfamily. ATCase family. In terms of assembly, heterododecamer (2C3:3R2) of six catalytic PyrB chains organized as two trimers (C3), and six regulatory PyrI chains organized as three dimers (R2).

It carries out the reaction carbamoyl phosphate + L-aspartate = N-carbamoyl-L-aspartate + phosphate + H(+). The protein operates within pyrimidine metabolism; UMP biosynthesis via de novo pathway; (S)-dihydroorotate from bicarbonate: step 2/3. Catalyzes the condensation of carbamoyl phosphate and aspartate to form carbamoyl aspartate and inorganic phosphate, the committed step in the de novo pyrimidine nucleotide biosynthesis pathway. The chain is Aspartate carbamoyltransferase catalytic subunit from Pelagibacter ubique (strain HTCC1062).